The following is a 287-amino-acid chain: Phosphatidylserine decarboxylase proenzyme (287 aa).

Residues aspartate 89, histidine 146, and serine 252 each act as charge relay system; for autoendoproteolytic cleavage activity in the active site. Serine 252 functions as the Schiff-base intermediate with substrate; via pyruvic acid; for decarboxylase activity in the catalytic mechanism. Serine 252 carries the pyruvic acid (Ser); by autocatalysis modification.

This sequence belongs to the phosphatidylserine decarboxylase family. PSD-B subfamily. Prokaryotic type I sub-subfamily. Heterodimer of a large membrane-associated beta subunit and a small pyruvoyl-containing alpha subunit. The cofactor is pyruvate. Post-translationally, is synthesized initially as an inactive proenzyme. Formation of the active enzyme involves a self-maturation process in which the active site pyruvoyl group is generated from an internal serine residue via an autocatalytic post-translational modification. Two non-identical subunits are generated from the proenzyme in this reaction, and the pyruvate is formed at the N-terminus of the alpha chain, which is derived from the carboxyl end of the proenzyme. The autoendoproteolytic cleavage occurs by a canonical serine protease mechanism, in which the side chain hydroxyl group of the serine supplies its oxygen atom to form the C-terminus of the beta chain, while the remainder of the serine residue undergoes an oxidative deamination to produce ammonia and the pyruvoyl prosthetic group on the alpha chain. During this reaction, the Ser that is part of the protease active site of the proenzyme becomes the pyruvoyl prosthetic group, which constitutes an essential element of the active site of the mature decarboxylase.

It localises to the cell membrane. It carries out the reaction a 1,2-diacyl-sn-glycero-3-phospho-L-serine + H(+) = a 1,2-diacyl-sn-glycero-3-phosphoethanolamine + CO2. It functions in the pathway phospholipid metabolism; phosphatidylethanolamine biosynthesis; phosphatidylethanolamine from CDP-diacylglycerol: step 2/2. Functionally, catalyzes the formation of phosphatidylethanolamine (PtdEtn) from phosphatidylserine (PtdSer). This chain is Phosphatidylserine decarboxylase proenzyme, found in Shewanella halifaxensis (strain HAW-EB4).